The following is a 345-amino-acid chain: Uroporphyrinogen decarboxylase (345 aa).

Substrate is bound by residues 28-32, aspartate 77, tyrosine 152, serine 207, and histidine 321; that span reads RQAGR.

It belongs to the uroporphyrinogen decarboxylase family. As to quaternary structure, homodimer.

The protein resides in the cytoplasm. The catalysed reaction is uroporphyrinogen III + 4 H(+) = coproporphyrinogen III + 4 CO2. The protein operates within porphyrin-containing compound metabolism; protoporphyrin-IX biosynthesis; coproporphyrinogen-III from 5-aminolevulinate: step 4/4. In terms of biological role, catalyzes the decarboxylation of four acetate groups of uroporphyrinogen-III to yield coproporphyrinogen-III. This chain is Uroporphyrinogen decarboxylase, found in Arthrobacter sp. (strain FB24).